A 404-amino-acid polypeptide reads, in one-letter code: DNA polymerase processivity factor BMRF1 (404 aa).

A homodimerization; DNA binding and DNA polymerase processivity region spans residues 1-300 (METTQTLRFK…SVILFNHASE (300 aa)). The segment at 301-404 (EAAASTASEP…KVKQAFNPLI (104 aa)) is transcriptional activation. Positions 302 to 404 (AAASTASEPE…KVKQAFNPLI (103 aa)) are disordered. A compositionally biased stretch (pro residues) spans 335–344 (SPSPPPPPRT). Residue S337 is modified to Phosphoserine. The residue at position 344 (T344) is a Phosphothreonine. S349 carries the phosphoserine modification. A Phosphothreonine modification is found at T355.

This sequence belongs to the herpesviridae DNA polymerase accessory subunit family. As to quaternary structure, homodimer. Two dimers can adopt a tetrameric ring-like structure. Forms a complex with the DNA-binding protein BALF2, the DNA polymerase subunit BALF5, and the alkaline exonuclease BGLF5. Interacts (via N-terminus) with BZLF1 (via bZIP domain); this interaction may inhibit BZLF1-induced transcription of the BMRF1 promoter. Interacts (via C-terminus) with host NuRD complex; this interaction is important for transcriptional activation of EBV promoters and inhibition of the ubiquitination step of DDR signaling. In terms of processing, phosphorylated by the viral BGLF4 kinase.

Its subcellular location is the virion tegument. The protein resides in the host nucleus. Acts as a DNA polymerase processivity factor; a transcriptional activator for several EBV promoters and inhibits the host DNA damage response (DDR) to double-stranded DNA breaks. Plays an essential role in the viral lytic DNA replication by acting as a polymerase accessory subunit. Stimulates the viral DNA polymerase activity and appears to function with it as a holoenzyme. Increases the processivity of the viral polymerase, probably by acting as a sliding clamp that prevents dissociation of the polymerase from the active template. In addition, BMRF1 transcriptionally activates the oriLyt early BHLF1 promoter. Promotes G1/S cell cycle arrest through p53 induction. The chain is DNA polymerase processivity factor BMRF1 from Epstein-Barr virus (strain AG876) (HHV-4).